Consider the following 423-residue polypeptide: Mannose-6-phosphate isomerase (423 aa).

A2 is subject to N-acetylalanine. 2 positions are modified to phosphoserine: S102 and S108. Positions 110, 112, 137, and 276 each coordinate Zn(2+). The active site involves R295.

It belongs to the mannose-6-phosphate isomerase type 1 family. Zn(2+) is required as a cofactor. In terms of tissue distribution, expressed in all tissues, but more abundant in testis.

The protein localises to the cytoplasm. It carries out the reaction D-mannose 6-phosphate = D-fructose 6-phosphate. It participates in nucleotide-sugar biosynthesis; GDP-alpha-D-mannose biosynthesis; alpha-D-mannose 1-phosphate from D-fructose 6-phosphate: step 1/2. Its function is as follows. Isomerase that catalyzes the interconversion of fructose-6-P and mannose-6-P and has a critical role in the supply of D-mannose derivatives required for many eukaryotic glycosylation reactions. The sequence is that of Mannose-6-phosphate isomerase from Mus musculus (Mouse).